We begin with the raw amino-acid sequence, 166 residues long: Cyclin-dependent kinase 4 inhibitor D (166 aa).

M1 is subject to N-acetylmethionine. 4 ANK repeats span residues 41–69 (FGKT…SPNV), 73–102 (SGTT…DVNA), 106–135 (TGAL…LHHR), and 138–166 (TGLT…VAPL).

This sequence belongs to the CDKN2 cyclin-dependent kinase inhibitor family. As to quaternary structure, interacts with CDK6.

It is found in the nucleus. Its subcellular location is the cytoplasm. Its function is as follows. Interacts strongly with CDK4 and CDK6 and inhibits them. This is Cyclin-dependent kinase 4 inhibitor D (CDKN2D) from Bos taurus (Bovine).